Here is a 384-residue protein sequence, read N- to C-terminus: 8-amino-7-oxononanoate synthase (384 aa).

A substrate-binding site is contributed by Arg21. Residue Gly108–Phe109 coordinates pyridoxal 5'-phosphate. A substrate-binding site is contributed by His133. The pyridoxal 5'-phosphate site is built by Ser179, His207, and Thr233. Residue Lys236 is modified to N6-(pyridoxal phosphate)lysine. Thr352 provides a ligand contact to substrate.

The protein belongs to the class-II pyridoxal-phosphate-dependent aminotransferase family. BioF subfamily. Homodimer. It depends on pyridoxal 5'-phosphate as a cofactor.

It catalyses the reaction 6-carboxyhexanoyl-[ACP] + L-alanine + H(+) = (8S)-8-amino-7-oxononanoate + holo-[ACP] + CO2. Its pathway is cofactor biosynthesis; biotin biosynthesis. In terms of biological role, catalyzes the decarboxylative condensation of pimeloyl-[acyl-carrier protein] and L-alanine to produce 8-amino-7-oxononanoate (AON), [acyl-carrier protein], and carbon dioxide. This Escherichia coli O8 (strain IAI1) protein is 8-amino-7-oxononanoate synthase.